Consider the following 132-residue polypeptide: Antileukoproteinase (132 aa).

Positions 1 to 24 are cleaved as a signal peptide; it reads MKFSGLFPFLLLALGTLALWAVEG. The 49-residue stretch at 28–76 folds into the WAP 1 domain; it reads EALKAGACPPRKSAQCFGNEKPRCSSDWQCPHKKKCCLDTCGTECLDPV. Intrachain disulfides connect Cys35–Cys64, Cys43–Cys68, Cys51–Cys63, and Cys57–Cys72. N-linked (GlcNAc...) asparagine glycosylation occurs at Asn77. The WAP 2 domain occupies 82–130; the sequence is VKKKPGTCPVIHGQCLMLKPLNHCETDDQCIGALKCCKAMCGKVCLSPV. 4 disulfides stabilise this stretch: Cys89–Cys118, Cys96–Cys122, Cys105–Cys117, and Cys111–Cys126.

As to quaternary structure, interacts with GRN; interaction protects progranulin from proteolysis. As to expression, detected in bronchoalveolar fluid (at protein level). Detected in large and small intestine, trachea, skin, lung and tongue.

It localises to the secreted. Acid-stable proteinase inhibitor with strong affinities for trypsin, chymotrypsin, elastase, and cathepsin G. Modulates the inflammatory and immune responses after bacterial infection, and after infection by the intracellular parasite L.major. Down-regulates responses to bacterial lipopolysaccharide (LPS). Plays a role in regulating the activation of NF-kappa-B and inflammatory responses. Has antimicrobial activity against mycobacteria, but not against salmonella. Contributes to normal resistance against infection by M.tuberculosis. Required for normal resistance to infection by L.major. Required for normal wound healing, probably by preventing tissue damage by limiting protease activity. Together with ELANE, required for normal differentiation and proliferation of bone marrow myeloid cells. This Ovis aries (Sheep) protein is Antileukoproteinase (SLPI).